Here is a 327-residue protein sequence, read N- to C-terminus: Polyprenyl transferase andD (327 aa).

8 helical membrane passes run 49 to 69 (LGYI…ASIA), 81 to 101 (ITLL…WDDI), 140 to 160 (FAFV…MLFF), 174 to 194 (PQLI…GLNL), 201 to 221 (IPMA…DIIY), 244 to 264 (CLDA…VIAG), 271 to 291 (APFF…LAMA), and 307 to 327 (CCTS…VWRS).

Belongs to the UbiA prenyltransferase family. Mg(2+) serves as cofactor.

It localises to the membrane. The protein operates within secondary metabolite biosynthesis; terpenoid biosynthesis. Polyprenyl transferase; part of the gene cluster that mediates the biosynthesis of anditomin, a fungal meroterpenoid. The first step of the pathway is the synthesis of 3,5-dimethylorsellinic acid (DMOA) by the polyketide synthase andM. DMOA is then converted to the phthalide compound 5,7-dihydroxy-4,6-dimethylphthalide (DHDMP) by the cytochrome P450 monooxygenase andK, which is further prenylated by the prenyltransferase andD to yield farnesyl-DHDMP. Further epoxidation by the FAD-dependent monooxygenase andE leads to epoxyfarnesyl-DHDMP. The next step involves the terpene cyclase andB that converts epoxyfarnesyl-DHDMP into preandiloid A through opening of the epoxide ring followed by the cyclization of the farnesyl moiety. Preandiloid A is in turn oxidized at the C-3 hydroxyl group to yield preandiloid B by the dehydrogenase andC. The dioxygenase andA is solely responsible for the dehydrogenation of preandiloid B leading to the enone preandiloid C, as well as for the intriguing structural rearrangement to generate the bicyclo[2.2.2]octane core, transforming preandiloid C into andiconin. FAD-binding monooxygenase andJ then produces andilesin D which is reduced by dehydrogenase andI to yield andilesin A. Action of acetyltransferase andG followed by a spontaneous acetate elimination leads then to andilesin B, which is in turn substrate of the short chain dehydrogenase andH to yield andilesin C. Finally, the dioxygenase andF catalyzes the transformation of andilesin C to anditomin. The protein is Polyprenyl transferase andD of Emericella variicolor (Aspergillus stellatus).